The following is a 224-amino-acid chain: MNKKTESKEQKRSFRSAIVLAGGRGRRMGMVEKALLEFERKTILERLLENLFRVVDEVILSVRDNSQKEKLFPVLDKFPDREIRFCFDSLEDAGPLEGIRAGLLESRSENSFVCAGDMPFVNPEIVDLLFEKASGHDAAIPRWEERMFEPLHAVYSKKMLPEIEKAFERGKHSVLAPVFQMQDVVFVEVSEIREFDPELRTFVNINTVEDLENMIGHAKEKVGL.

GTP is bound by residues 20 to 22 (LAG), Lys33, Asp88, and Asp117. Position 117 (Asp117) interacts with Mg(2+).

Belongs to the MobA family. Mg(2+) serves as cofactor.

The protein resides in the cytoplasm. It catalyses the reaction Mo-molybdopterin + GTP + H(+) = Mo-molybdopterin guanine dinucleotide + diphosphate. In terms of biological role, transfers a GMP moiety from GTP to Mo-molybdopterin (Mo-MPT) cofactor (Moco or molybdenum cofactor) to form Mo-molybdopterin guanine dinucleotide (Mo-MGD) cofactor. The chain is Probable molybdenum cofactor guanylyltransferase from Methanosarcina mazei (strain ATCC BAA-159 / DSM 3647 / Goe1 / Go1 / JCM 11833 / OCM 88) (Methanosarcina frisia).